A 206-amino-acid chain; its full sequence is MVFKIKDEWGEFLVRLARRAIEEYLKTGKEIEPPKDTPPELWEKMGVFVTLNRYNVPPQTALRGCIGFPTPIYPLVEATIKAAIYSAVDDPRFPPVKLEEMDNLVVEVSVLTPPELIEGPPEERPRKIKVGRDGLIVEKGIYSGLLLPQVPVEWGWDEEEFLAETCWKAGLPPDCWLDEDTKVYKFTAEIFEEEYPRGPIKRKPLV.

An AMMECR1 domain is found at 8 to 202 (EWGEFLVRLA…EEYPRGPIKR (195 aa)).

This Pyrococcus horikoshii (strain ATCC 700860 / DSM 12428 / JCM 9974 / NBRC 100139 / OT-3) protein is Protein PH0010.